We begin with the raw amino-acid sequence, 248 residues long: 2,3-dihydro-2,3-dihydroxybenzoate dehydrogenase (248 aa).

An NAD(+)-binding site is contributed by Trp-9 to Thr-33. A substrate-binding site is contributed by Ser-131. The active-site Proton acceptor is Tyr-144.

This sequence belongs to the short-chain dehydrogenases/reductases (SDR) family. In terms of assembly, homotetramer; dimer of dimers. EntA and EntE interact together.

It catalyses the reaction (2S,3S)-2,3-dihydroxy-2,3-dihydrobenzoate + NAD(+) = 2,3-dihydroxybenzoate + NADH + H(+). The protein operates within siderophore biosynthesis; enterobactin biosynthesis. Its activity is regulated as follows. Inhibited by cis-2-hydroxy-3-cyclohexen-1-carboxylate, cis-2-hydroxycyclohexane-1-carboxylate and trans-2-hydroxycyclohexane-1-carboxylate. Its function is as follows. Involved in the biosynthesis of the siderophore enterobactin (enterochelin), which is a macrocyclic trimeric lactone of N-(2,3-dihydroxybenzoyl)-serine. Catalyzes the reversible NAD-dependent oxidation of the C3-hydroxyl group of 2,3-dihydro-2,3-dihydroxybenzoate (2,3-diDHB), producing the transient intermediate 2-hydroxy-3-oxo-4,6-cyclohexadiene-1-carboxylate, which undergoes rapid aromatization to the final product, 2,3-dihydroxybenzoate (2,3-DHB). Only the compounds with a C3-hydroxyl group such as methyl 2,3-dihydro-2,3-dihydroxybenzoate, methyl-3-hydroxy-1,4-cyclohexadiene-1-carboxylate, trans-3-hydroxy-2-cyclohexene-1-carboxylate, cis-3-hydroxy-4-cyclohexene-1-carboxylate, cis-3-hydroxycyclohexane-1-carboxylic acid are oxidized to the corresponding ketone products. The stereospecificity of the C3 allylic alcohol group oxidation is 3R in a 1R,3R dihydro substrate. It can also increase the DHB-AMP ligase activity of EntE by interaction EntE. This chain is 2,3-dihydro-2,3-dihydroxybenzoate dehydrogenase, found in Escherichia coli (strain K12).